We begin with the raw amino-acid sequence, 120 residues long: NAD(P)H-quinone oxidoreductase subunit 3, chloroplastic (120 aa).

The next 3 membrane-spanning stretches (helical) occupy residues 9–29, 64–84, and 88–108; these read IFWA…LISG, MFAL…PWAM, and VLGV…IVGS.

It belongs to the complex I subunit 3 family. NDH is composed of at least 16 different subunits, 5 of which are encoded in the nucleus.

It localises to the plastid. It is found in the chloroplast thylakoid membrane. The enzyme catalyses a plastoquinone + NADH + (n+1) H(+)(in) = a plastoquinol + NAD(+) + n H(+)(out). It catalyses the reaction a plastoquinone + NADPH + (n+1) H(+)(in) = a plastoquinol + NADP(+) + n H(+)(out). Functionally, NDH shuttles electrons from NAD(P)H:plastoquinone, via FMN and iron-sulfur (Fe-S) centers, to quinones in the photosynthetic chain and possibly in a chloroplast respiratory chain. The immediate electron acceptor for the enzyme in this species is believed to be plastoquinone. Couples the redox reaction to proton translocation, and thus conserves the redox energy in a proton gradient. This is NAD(P)H-quinone oxidoreductase subunit 3, chloroplastic from Amborella trichopoda.